Here is a 506-residue protein sequence, read N- to C-terminus: Asparagine--tRNA ligase (506 aa).

It belongs to the class-II aminoacyl-tRNA synthetase family. As to quaternary structure, homodimer.

The protein localises to the cytoplasm. The enzyme catalyses tRNA(Asn) + L-asparagine + ATP = L-asparaginyl-tRNA(Asn) + AMP + diphosphate + H(+). This Onion yellows phytoplasma (strain OY-M) protein is Asparagine--tRNA ligase.